The primary structure comprises 322 residues: Ribose-phosphate pyrophosphokinase (322 aa).

ATP contacts are provided by residues 43–45 (DGE) and 102–103 (RQ). The Mg(2+) site is built by His137 and Asp177. Residue Lys201 is part of the active site. D-ribose 5-phosphate is bound by residues Arg203, Asp227, and 231–235 (DTAGT).

It belongs to the ribose-phosphate pyrophosphokinase family. Class I subfamily. In terms of assembly, homohexamer. The cofactor is Mg(2+).

The protein resides in the cytoplasm. It carries out the reaction D-ribose 5-phosphate + ATP = 5-phospho-alpha-D-ribose 1-diphosphate + AMP + H(+). It participates in metabolic intermediate biosynthesis; 5-phospho-alpha-D-ribose 1-diphosphate biosynthesis; 5-phospho-alpha-D-ribose 1-diphosphate from D-ribose 5-phosphate (route I): step 1/1. In terms of biological role, involved in the biosynthesis of the central metabolite phospho-alpha-D-ribosyl-1-pyrophosphate (PRPP) via the transfer of pyrophosphoryl group from ATP to 1-hydroxyl of ribose-5-phosphate (Rib-5-P). This is Ribose-phosphate pyrophosphokinase from Xylella fastidiosa (strain Temecula1 / ATCC 700964).